The primary structure comprises 350 residues: UDP-N-acetylenolpyruvoylglucosamine reductase (350 aa).

In terms of domain architecture, FAD-binding PCMH-type spans 24–195 (HVEATARWLL…VAVEFNLPLL (172 aa)). Arginine 172 is an active-site residue. Residue serine 245 is the Proton donor of the active site. Glutamate 342 is a catalytic residue.

This sequence belongs to the MurB family. The cofactor is FAD.

Its subcellular location is the cytoplasm. The catalysed reaction is UDP-N-acetyl-alpha-D-muramate + NADP(+) = UDP-N-acetyl-3-O-(1-carboxyvinyl)-alpha-D-glucosamine + NADPH + H(+). Its pathway is cell wall biogenesis; peptidoglycan biosynthesis. Functionally, cell wall formation. The chain is UDP-N-acetylenolpyruvoylglucosamine reductase from Xanthomonas euvesicatoria pv. vesicatoria (strain 85-10) (Xanthomonas campestris pv. vesicatoria).